The chain runs to 827 residues: Copper-transporting ATPase 2 (827 aa).

HMA domains follow at residues 15 to 80 (VSTN…YAPR) and 82 to 148 (ATEE…YELR). Residues Cys-26, Cys-29, Cys-93, and Cys-96 each contribute to the Cu cation site. 6 consecutive transmembrane segments (helical) span residues 174 to 194 (VTISVLMTLPLFLMEMGSHFI), 210 to 230 (NLYLQFALATLVLFGPGLRFF), 246 to 266 (SLVVLGTTAAWGYSVVATFVP), 271 to 291 (SGTANVYYEAAAVIVTLVLLG), 430 to 450 (GWFVPAVILAAVLTFAAWYTF), and 458 to 478 (FALVNAVAVLIIACPCAMGLA). Asp-515 functions as the 4-aspartylphosphate intermediate in the catalytic mechanism. 2 residues coordinate Mg(2+): Asp-714 and Asp-718. 2 consecutive transmembrane segments (helical) span residues 771–793 (NLFWAFAYNVSLIPVAAGVLYPV) and 797–819 (LLSPIFAAAAMAMSSVFVLGNAL).

Belongs to the cation transport ATPase (P-type) (TC 3.A.3) family. Type IB subfamily.

The protein resides in the cell membrane. It carries out the reaction Cu(2+)(in) + ATP + H2O = Cu(2+)(out) + ADP + phosphate + H(+). Involved in copper transport. The sequence is that of Copper-transporting ATPase 2 (actP2) from Rhizobium meliloti (strain 1021) (Ensifer meliloti).